Consider the following 473-residue polypeptide: Aspartyl/glutamyl-tRNA(Asn/Gln) amidotransferase subunit B (473 aa).

Belongs to the GatB/GatE family. GatB subfamily. As to quaternary structure, heterotrimer of A, B and C subunits.

The enzyme catalyses L-glutamyl-tRNA(Gln) + L-glutamine + ATP + H2O = L-glutaminyl-tRNA(Gln) + L-glutamate + ADP + phosphate + H(+). It catalyses the reaction L-aspartyl-tRNA(Asn) + L-glutamine + ATP + H2O = L-asparaginyl-tRNA(Asn) + L-glutamate + ADP + phosphate + 2 H(+). Functionally, allows the formation of correctly charged Asn-tRNA(Asn) or Gln-tRNA(Gln) through the transamidation of misacylated Asp-tRNA(Asn) or Glu-tRNA(Gln) in organisms which lack either or both of asparaginyl-tRNA or glutaminyl-tRNA synthetases. The reaction takes place in the presence of glutamine and ATP through an activated phospho-Asp-tRNA(Asn) or phospho-Glu-tRNA(Gln). This is Aspartyl/glutamyl-tRNA(Asn/Gln) amidotransferase subunit B from Francisella tularensis subsp. tularensis (strain FSC 198).